Reading from the N-terminus, the 221-residue chain is Serine/arginine-rich splicing factor 2 (221 aa).

In terms of domain architecture, RRM spans 14-92 (TSLKVDNLTY…RELRVQMARY (79 aa)). Residues 91–221 (RYGRPPDSHH…SPEEEGAVSS (131 aa)) are disordered. Composition is skewed to basic residues over residues 117–171 (RRSR…RSKS) and 179–189 (SRSRSRSRSRS).

The protein belongs to the splicing factor SR family. In terms of processing, extensively phosphorylated on serine residues in the RS domain.

The protein localises to the nucleus. Functionally, necessary for the splicing of pre-mRNA. It is required for formation of the earliest ATP-dependent splicing complex and interacts with spliceosomal components bound to both the 5'- and 3'-splice sites during spliceosome assembly. It also is required for ATP-dependent interactions of both U1 and U2 snRNPs with pre-mRNA. The protein is Serine/arginine-rich splicing factor 2 (SRSF2) of Gallus gallus (Chicken).